A 466-amino-acid chain; its full sequence is Alpha-1A adrenergic receptor (466 aa).

Residues 1–27 (MVLLSENASEGSNCTHPPAPVNISKAI) lie on the Extracellular side of the membrane. N-linked (GlcNAc...) asparagine glycosylation is found at N7, N13, and N22. Residues 28-51 (LLGVILGGLIIFGVLGNILVILSV) traverse the membrane as a helical segment. The Cytoplasmic segment spans residues 52–64 (ACHRHLHSVTHYY). A helical membrane pass occupies residues 65 to 88 (IVNLAVADLLLTSTVLPFSAIFEI). The Extracellular portion of the chain corresponds to 89–99 (LGYWAFGRVFC). An intrachain disulfide couples C99 to C176. A helical membrane pass occupies residues 100–122 (NIWAAVDVLCCTASIMGLCIISI). The Cytoplasmic segment spans residues 123-143 (DRYIGVSYPLRYPTIVTQRRG). The chain crosses the membrane as a helical span at residues 144-167 (VRALLCVWVLSLVISIGPLFGWRQ). The Extracellular segment spans residues 168–181 (PAPEDETICQINEE). Residues 182–205 (PGYVLFSALGSFYVPLAIILVMYC) form a helical membrane-spanning segment. The Cytoplasmic portion of the chain corresponds to 206–273 (RVYVVAKRES…FSREKKAAKT (68 aa)). Residue S215 is modified to Phosphoserine; by PKA. Residues 274 to 297 (LGIVVGCFVLCWLPFFLVMPIGSF) form a helical membrane-spanning segment. Residues 298–305 (FPDFKPSE) are Extracellular-facing. A helical transmembrane segment spans residues 306 to 329 (TVFKIVFWLGYLNSCINPIIYPCS). The Cytoplasmic segment spans residues 330 to 466 (SQEFKKAFQN…ISLGENGEEV (137 aa)). The Nuclear localization signal signature appears at 334–349 (KKAFQNVLRIQCLRRR). C345 is lipidated: S-palmitoyl cysteine.

This sequence belongs to the G-protein coupled receptor 1 family. Adrenergic receptor subfamily. ADRA1A sub-subfamily. Homo- and heterooligomer. Heterooligomerizes with ADRA1B homooligomers in cardiac myocytes. Interacts with CAVIN4. C-terminal Ser or Thr residues may be phosphorylated. In terms of tissue distribution, abundant in heart, brain, aorta, vena cava, vas deferens, submaxillary gland, lung, and kidney. Found at lower levels in prostate, parotid gland and skeletal muscle.

The protein resides in the nucleus membrane. It is found in the cell membrane. The protein localises to the cytoplasm. It localises to the membrane. Its subcellular location is the caveola. This alpha-adrenergic receptor mediates its action by association with G proteins that activate a phosphatidylinositol-calcium second messenger system. Its effect is mediated by G(q) and G(11) proteins. Nuclear ADRA1A-ADRA1B heterooligomers regulate phenylephrine (PE)-stimulated ERK signaling in cardiac myocytes. This chain is Alpha-1A adrenergic receptor (Adra1a), found in Rattus norvegicus (Rat).